Consider the following 466-residue polypeptide: Soluble pyridine nucleotide transhydrogenase (466 aa).

Residue Glu36–Cys45 participates in FAD binding.

This sequence belongs to the class-I pyridine nucleotide-disulfide oxidoreductase family. Requires FAD as cofactor.

The protein localises to the cytoplasm. It catalyses the reaction NAD(+) + NADPH = NADH + NADP(+). Its function is as follows. Conversion of NADPH, generated by peripheral catabolic pathways, to NADH, which can enter the respiratory chain for energy generation. The sequence is that of Soluble pyridine nucleotide transhydrogenase from Vibrio atlanticus (strain LGP32) (Vibrio splendidus (strain Mel32)).